We begin with the raw amino-acid sequence, 792 residues long: Host cell factor 2 (792 aa).

4 Kelch repeats span residues 34-79, 83-130, 207-255, and 257-303; these read LMII…GFVC, RILV…RLGH, KMYV…VIGN, and MYIF…VSDS. Positions 359–449 constitute a Fibronectin type-III 1 domain; it reads APSQVQLIKA…QPATKETSMK (91 aa). The segment at 399-447 is disordered; sequence ASSDSSAAPNMQGVRMDPHRQGSNNIVPNSINDTINSTKTEQPATKETS. Over residues 419–445 the composition is skewed to polar residues; the sequence is QGSNNIVPNSINDTINSTKTEQPATKE. K553 is covalently cross-linked (Glycyl lysine isopeptide (Lys-Gly) (interchain with G-Cter in SUMO2)). 2 Fibronectin type-III domains span residues 583 to 675 and 677 to 787; these read TPSN…TCIP and FPGA…GNNK.

In terms of assembly, binds KMT2A/MLL1. Component of the MLL1/MLL complex, at least composed of KMT2A/MLL1, ASH2L, RBBP5, DPY30, WDR5, MEN1, HCFC1 and HCFC2. Interacts with TASOR. In terms of tissue distribution, highly expressed in testis. Detected at lower levels in spleen, thymus, prostate, ovary, small intestine and colon.

The protein localises to the cytoplasm. It is found in the nucleus. The chain is Host cell factor 2 (HCFC2) from Homo sapiens (Human).